The chain runs to 159 residues: Putative ribosomal RNA large subunit methyltransferase H (159 aa).

Residues leucine 76, glycine 108, and 127–132 (FSKMTF) contribute to the S-adenosyl-L-methionine site.

It belongs to the RNA methyltransferase RlmH family.

The protein localises to the cytoplasm. It catalyses the reaction pseudouridine(1915) in 23S rRNA + S-adenosyl-L-methionine = N(3)-methylpseudouridine(1915) in 23S rRNA + S-adenosyl-L-homocysteine + H(+). In terms of biological role, specifically methylates the pseudouridine at position 1915 (m3Psi1915) in 23S rRNA. This is Putative ribosomal RNA large subunit methyltransferase H from Methanococcus maripaludis (strain C6 / ATCC BAA-1332).